The primary structure comprises 232 residues: Large ribosomal subunit protein uL1 (232 aa).

It belongs to the universal ribosomal protein uL1 family. As to quaternary structure, part of the 50S ribosomal subunit.

Its function is as follows. Binds directly to 23S rRNA. The L1 stalk is quite mobile in the ribosome, and is involved in E site tRNA release. In terms of biological role, protein L1 is also a translational repressor protein, it controls the translation of the L11 operon by binding to its mRNA. The polypeptide is Large ribosomal subunit protein uL1 (Bacteroides fragilis (strain ATCC 25285 / DSM 2151 / CCUG 4856 / JCM 11019 / LMG 10263 / NCTC 9343 / Onslow / VPI 2553 / EN-2)).